The primary structure comprises 409 residues: Tryptophan synthase beta chain (409 aa).

Residue Lys-98 is modified to N6-(pyridoxal phosphate)lysine.

The protein belongs to the TrpB family. As to quaternary structure, tetramer of two alpha and two beta chains. The cofactor is pyridoxal 5'-phosphate.

The catalysed reaction is (1S,2R)-1-C-(indol-3-yl)glycerol 3-phosphate + L-serine = D-glyceraldehyde 3-phosphate + L-tryptophan + H2O. It participates in amino-acid biosynthesis; L-tryptophan biosynthesis; L-tryptophan from chorismate: step 5/5. The beta subunit is responsible for the synthesis of L-tryptophan from indole and L-serine. The polypeptide is Tryptophan synthase beta chain (Jannaschia sp. (strain CCS1)).